Consider the following 407-residue polypeptide: Phosphopentomutase (407 aa).

Residues Asp-10, Asp-306, His-311, Asp-347, His-348, and His-359 each coordinate Mn(2+).

It belongs to the phosphopentomutase family. Mn(2+) is required as a cofactor.

The protein resides in the cytoplasm. It carries out the reaction 2-deoxy-alpha-D-ribose 1-phosphate = 2-deoxy-D-ribose 5-phosphate. The enzyme catalyses alpha-D-ribose 1-phosphate = D-ribose 5-phosphate. It participates in carbohydrate degradation; 2-deoxy-D-ribose 1-phosphate degradation; D-glyceraldehyde 3-phosphate and acetaldehyde from 2-deoxy-alpha-D-ribose 1-phosphate: step 1/2. Isomerase that catalyzes the conversion of deoxy-ribose 1-phosphate (dRib-1-P) and ribose 1-phosphate (Rib-1-P) to deoxy-ribose 5-phosphate (dRib-5-P) and ribose 5-phosphate (Rib-5-P), respectively. The sequence is that of Phosphopentomutase from Edwardsiella ictaluri (strain 93-146).